The primary structure comprises 309 residues: UPF0276 protein RB0508 (309 aa).

Belongs to the UPF0276 family.

The protein is UPF0276 protein RB0508 of Rhizobium meliloti (strain 1021) (Ensifer meliloti).